The sequence spans 114 residues: Histone H3-7 (114 aa).

Over residues 1–17 (NTGGKAPRKHIAHKQAK) the composition is skewed to basic residues. The segment at 1–32 (NTGGKAPRKHIAHKQAKKSSAAAATGGVKKPH) is disordered. Residues 18–28 (KSSAAAATGGV) are compositionally biased toward low complexity.

This sequence belongs to the histone H3 family. In terms of assembly, the nucleosome is a histone octamer containing two molecules each of H2A, H2B, H3 and H4 assembled in one H3-H4 heterotetramer and two H2A-H2B heterodimers. The octamer wraps approximately 147 bp of DNA.

It is found in the nucleus. Its subcellular location is the chromosome. Core component of nucleosome. Nucleosomes wrap and compact DNA into chromatin, limiting DNA accessibility to the cellular machineries which require DNA as a template. Histones thereby play a central role in transcription regulation, DNA repair, DNA replication and chromosomal stability. DNA accessibility is regulated via a complex set of post-translational modifications of histones, also called histone code, and nucleosome remodeling. The protein is Histone H3-7 (H3-7) of Stylonychia lemnae (Ciliate).